Consider the following 467-residue polypeptide: Dimethylamine methyltransferase MtbB1 (467 aa).

Pyl-356 is a non-standard amino acid (pyrrolysine).

Belongs to the dimethylamine methyltransferase family.

It catalyses the reaction Co(I)-[dimethylamine-specific corrinoid protein] + dimethylamine + H(+) = methyl-Co(III)-[dimethylamine-specific corrinoid protein] + methylamine. It participates in one-carbon metabolism; methanogenesis from dimethylamine. Catalyzes the transfer of a methyl group from dimethylamine to the corrinoid cofactor of MtbC. The sequence is that of Dimethylamine methyltransferase MtbB1 (mtbB1) from Methanosarcina acetivorans (strain ATCC 35395 / DSM 2834 / JCM 12185 / C2A).